The following is a 564-amino-acid chain: Mitochondrial distribution and morphology protein 34 (564 aa).

In terms of domain architecture, SMP-LTD spans methionine 1–glutamate 208. 5 disordered regions span residues glutamate 208–asparagine 240, serine 336–threonine 397, glutamine 404–aspartate 423, arginine 434–glutamine 517, and isoleucine 532–histidine 564. Polar residues predominate over residues serine 209–proline 219. Residues serine 351–arginine 365 are compositionally biased toward basic residues. Residues valine 366–aspartate 376 show a composition bias toward basic and acidic residues. Residues serine 380–glutamate 390 are compositionally biased toward low complexity. 2 stretches are compositionally biased toward polar residues: residues glycine 438–serine 462 and proline 477–isoleucine 503.

This sequence belongs to the MDM34 family. As to quaternary structure, component of the ER-mitochondria encounter structure (ERMES) or MDM complex, composed of mmm1, mdm10, mdm12 and mdm34.

Its subcellular location is the mitochondrion outer membrane. Functionally, component of the ERMES/MDM complex, which serves as a molecular tether to connect the endoplasmic reticulum (ER) and mitochondria. Components of this complex are involved in the control of mitochondrial shape and protein biogenesis, and function in nonvesicular lipid trafficking between the ER and mitochondria. Mdm34 is required for the interaction of the ER-resident membrane protein mmm1 and the outer mitochondrial membrane-resident beta-barrel protein mdm10. This chain is Mitochondrial distribution and morphology protein 34, found in Talaromyces stipitatus (strain ATCC 10500 / CBS 375.48 / QM 6759 / NRRL 1006) (Penicillium stipitatum).